Consider the following 461-residue polypeptide: MSVRIEHDTFGEIEVPGDKYWGAQTERSKRNFPVGKERMPIEVVYGFAQLKRGAALANHELGKLSDAKKDAIVYACDLILKGELDEHFPLVVWQTGSGTQSNMNVNEVVSFVANKYLKEQGIDESIHPNDDVNKSQSSNDTFPTAMHVALYHEVETKLEPALKHLRDTFKEKEDKYQSIIKIGRTHLQDATPIKLGQEISGWRYMLDKCEELLAESKKHILSLAIGGTAVGTGINAHPEFGNKVAKFISENTGYNFVSSENKFHALTSHDEVVQLHGTLKALAADLMKIANDIRWLASGPRAGLAEISIPENEPGSSIMPGKVNPTQCEMLTMVAVQVMGNDTTVGIASSQGNFELNVFKPVILHNTLQSIYLLADGMQTFNDNCAVGIEPIEENINNYLNQSLMLVTALNPHIGYEKAAQIAKKAHKEGLTLKESAIQSGHVTEEQFEEWIKPEDMVDPH.

Residues 97–99, 127–130, 137–139, and T185 contribute to the substrate site; these read SGT, HPND, and SSN. H186 (proton donor/acceptor) is an active-site residue. S316 is an active-site residue. Substrate contacts are provided by residues S317 and 322–324; that span reads KVN.

Belongs to the class-II fumarase/aspartase family. Fumarase subfamily. Homotetramer.

It is found in the cytoplasm. It catalyses the reaction (S)-malate = fumarate + H2O. The protein operates within carbohydrate metabolism; tricarboxylic acid cycle; (S)-malate from fumarate: step 1/1. In terms of biological role, involved in the TCA cycle. Catalyzes the stereospecific interconversion of fumarate to L-malate. This Staphylococcus haemolyticus (strain JCSC1435) protein is Fumarate hydratase class II.